The chain runs to 250 residues: Transcriptional activator protein ExpR (250 aa).

The 66-residue stretch at 173–238 (KSQEADLFSQ…HAIRLGVEMN (66 aa)) folds into the HTH luxR-type domain. Positions 197–216 (YQEIALILGITTSTVKFHIG) form a DNA-binding region, H-T-H motif.

Belongs to the autoinducer-regulated transcriptional regulatory protein family.

Functions as an OHLL responsive transcriptional regulator that acts in virulence (soft rot disease) through the activation of genes for plant tissue macerating enzymes. The polypeptide is Transcriptional activator protein ExpR (expR) (Dickeya dadantii (strain 3937) (Erwinia chrysanthemi (strain 3937))).